Consider the following 217-residue polypeptide: Probable GTP-binding protein EngB (217 aa).

The EngB-type G domain occupies 29-213; it reads GPPEVAFAGR…RQAIAETVGI (185 aa). Residues 37 to 44, 64 to 68, 91 to 94, 158 to 161, and 192 to 194 contribute to the GTP site; these read GRSNVGKS, GRTQE, DMPG, TKTD, and TSS. Mg(2+) is bound by residues serine 44 and threonine 66.

It belongs to the TRAFAC class TrmE-Era-EngA-EngB-Septin-like GTPase superfamily. EngB GTPase family. Mg(2+) is required as a cofactor.

Necessary for normal cell division and for the maintenance of normal septation. In Rhizobium etli (strain ATCC 51251 / DSM 11541 / JCM 21823 / NBRC 15573 / CFN 42), this protein is Probable GTP-binding protein EngB.